The chain runs to 227 residues: 2-C-methyl-D-erythritol 4-phosphate cytidylyltransferase (227 aa).

Belongs to the IspD/TarI cytidylyltransferase family. IspD subfamily.

The catalysed reaction is 2-C-methyl-D-erythritol 4-phosphate + CTP + H(+) = 4-CDP-2-C-methyl-D-erythritol + diphosphate. It participates in isoprenoid biosynthesis; isopentenyl diphosphate biosynthesis via DXP pathway; isopentenyl diphosphate from 1-deoxy-D-xylulose 5-phosphate: step 2/6. Functionally, catalyzes the formation of 4-diphosphocytidyl-2-C-methyl-D-erythritol from CTP and 2-C-methyl-D-erythritol 4-phosphate (MEP). The polypeptide is 2-C-methyl-D-erythritol 4-phosphate cytidylyltransferase (Lachnospira eligens (strain ATCC 27750 / DSM 3376 / VPI C15-48 / C15-B4) (Eubacterium eligens)).